A 353-amino-acid chain; its full sequence is Mitochondrial distribution and morphology protein 10 (353 aa).

Belongs to the MDM10 family. As to quaternary structure, component of the ER-mitochondria encounter structure (ERMES) or MDM complex, composed of MMM1, MDM10, MDM12 and MDM34. Associates with the mitochondrial outer membrane sorting assembly machinery SAM(core) complex.

The protein localises to the mitochondrion outer membrane. Its function is as follows. Component of the ERMES/MDM complex, which serves as a molecular tether to connect the endoplasmic reticulum and mitochondria. Components of this complex are involved in the control of mitochondrial shape and protein biogenesis and may function in phospholipid exchange. MDM10 is involved in the late assembly steps of the general translocase of the mitochondrial outer membrane (TOM complex). Functions in the TOM40-specific route of the assembly of outer membrane beta-barrel proteins, including the association of TOM40 with the receptor TOM22 and small TOM proteins. Can associate with the SAM(core) complex as well as the MDM12-MMM1 complex, both involved in late steps of the major beta-barrel assembly pathway, that is responsible for biogenesis of all outer membrane beta-barrel proteins. May act as a switch that shuttles between both complexes and channels precursor proteins into the TOM40-specific pathway. Plays a role in mitochondrial morphology and in the inheritance of mitochondria. This Yarrowia lipolytica (strain CLIB 122 / E 150) (Yeast) protein is Mitochondrial distribution and morphology protein 10.